A 146-amino-acid chain; its full sequence is PTSVAVDQGSMVSNSPGEWCWPGMGYPVYPFPRCRALVKSQCAGGQVVESIQKDCCRQIAAIGDEWCICGALGSMRGSMYKELGVALADDKATVAEVFPGCRTEVMDRAVASLPAVCNQYIPNTNGTDGVCYWLSYYQPPRQMSSR.

An N-terminal signal peptide occupies residues 1–14 (PTSVAVDQGSMVSN). Asparagine 125 carries N-linked (GlcNAc...) asparagine glycosylation.

Belongs to the protease inhibitor I6 (cereal trypsin/alpha-amylase inhibitor) family. As to quaternary structure, monomer. Five disulfide bonds, which are essential for the inhibitor activity, are probably present. Post-translationally, glycosylated. In terms of tissue distribution, endosperm.

The protein resides in the secreted. Could be involved in insect defense mechanisms. Inhibits insect-type alpha-amylase. The sequence is that of Alpha-amylase inhibitor BMAI-1 (IAM1) from Hordeum vulgare (Barley).